We begin with the raw amino-acid sequence, 110 residues long: Cell division protein FtsB (110 aa).

Over 1-3 (MRL) the chain is Cytoplasmic. A helical membrane pass occupies residues 4–21 (IILCLAALVLLIQFPLWL). Topologically, residues 22–110 (GKGGWLRVWD…PPKIEPKEKR (89 aa)) are periplasmic. Residues 31 to 64 (DLDQQVIAAQKKNDELRARNAKLNSEVQDLKEGT) adopt a coiled-coil conformation.

The protein belongs to the FtsB family. Part of a complex composed of FtsB, FtsL and FtsQ.

Its subcellular location is the cell inner membrane. Its function is as follows. Essential cell division protein. May link together the upstream cell division proteins, which are predominantly cytoplasmic, with the downstream cell division proteins, which are predominantly periplasmic. In Herminiimonas arsenicoxydans, this protein is Cell division protein FtsB.